The chain runs to 737 residues: Serine/threonine-protein kinase dst1 (737 aa).

A Protein kinase domain is found at 29–281 (YHIQERLGKG…AKELLNHEFI (253 aa)). ATP contacts are provided by residues 35–43 (LGKGSFGQV) and Lys-58. Catalysis depends on Asp-149, which acts as the Proton acceptor. Disordered stretches follow at residues 305-356 (SMFE…SNNY), 372-475 (KDDA…TTDQ), 491-559 (KPIT…ISNN), and 575-631 (NNNI…ESLS). Low complexity-rich tracts occupy residues 334–345 (NNNTVTNYSTVI), 401–410 (SSCSSSSSSS), 425–444 (PITNSPKISPISSNNINKIP), and 454–473 (ATTTTTTTTTTTTTAASTTT). Residues 491–503 (KPITSSNSTSVTP) are compositionally biased toward polar residues. Residues 510 to 525 (SNNTTTTSNINTPIKP) are compositionally biased toward low complexity. Polar residues-rich tracts occupy residues 529–554 (LKKSNSNTPVQLKTSGDKTPTTTPLK) and 585–596 (SPTTGQKIIKTN). Over residues 597–615 (SGGVLKSSGGLSSKRSPSS) the composition is skewed to low complexity.

This sequence belongs to the protein kinase superfamily. STE Ser/Thr protein kinase family. STE20 subfamily. Requires Mg(2+) as cofactor.

The catalysed reaction is L-seryl-[protein] + ATP = O-phospho-L-seryl-[protein] + ADP + H(+). It catalyses the reaction L-threonyl-[protein] + ATP = O-phospho-L-threonyl-[protein] + ADP + H(+). This Dictyostelium discoideum (Social amoeba) protein is Serine/threonine-protein kinase dst1.